The sequence spans 998 residues: Mediator of RNA polymerase II transcription subunit 14 (998 aa).

The protein belongs to the Mediator complex subunit 14 family. As to quaternary structure, component of the Mediator complex.

The protein resides in the nucleus. Its function is as follows. Component of the Mediator complex, a coactivator involved in the regulated transcription of nearly all RNA polymerase II-dependent genes. Mediator functions as a bridge to convey information from gene-specific regulatory proteins to the basal RNA polymerase II transcription machinery. Mediator is recruited to promoters by direct interactions with regulatory proteins and serves as a scaffold for the assembly of a functional preinitiation complex with RNA polymerase II and the general transcription factors. The chain is Mediator of RNA polymerase II transcription subunit 14 (RGR1) from Kluyveromyces lactis (strain ATCC 8585 / CBS 2359 / DSM 70799 / NBRC 1267 / NRRL Y-1140 / WM37) (Yeast).